Consider the following 396-residue polypeptide: Acetate kinase (396 aa).

N7 serves as a coordination point for Mg(2+). K14 contacts ATP. Residue R88 participates in substrate binding. Catalysis depends on D145, which acts as the Proton donor/acceptor. ATP contacts are provided by residues 205–209 (HLGNG), 279–281 (DFR), and 327–331 (GIGEN). E381 provides a ligand contact to Mg(2+).

This sequence belongs to the acetokinase family. In terms of assembly, homodimer. Mg(2+) serves as cofactor. It depends on Mn(2+) as a cofactor.

The protein resides in the cytoplasm. The enzyme catalyses acetate + ATP = acetyl phosphate + ADP. The protein operates within metabolic intermediate biosynthesis; acetyl-CoA biosynthesis; acetyl-CoA from acetate: step 1/2. In terms of biological role, catalyzes the formation of acetyl phosphate from acetate and ATP. Can also catalyze the reverse reaction. The chain is Acetate kinase from Campylobacter jejuni (strain RM1221).